A 245-amino-acid polypeptide reads, in one-letter code: E3 ubiquitin-protein ligase RNF138 (245 aa).

An RING-type zinc finger spans residues 18–58; the sequence is CPVCQEVLKTPVRTAACQHVFCRKCFLTAMRESGIHCPLCR. Cysteine 86, cysteine 89, histidine 101, and cysteine 105 together coordinate Zn(2+). Residues 86 to 105 form a C2HC RNF-type zinc finger; that stretch reads CRCCSKKIKFYRMRHHYKSC. The tract at residues 128–154 is disordered; it reads VRSSNRSETSASDNTETYQEDTSSSGH. At threonine 142 the chain carries Phosphothreonine. C2H2-type zinc fingers lie at residues 157 to 180 and 187 to 215; these read FKCP…NSNH and VTCP…NQRH. The UIM domain occupies 225 to 243; the sequence is LQLDEETQYQTAVEESFQV.

In terms of assembly, interacts with NLK. Interacts with XRCC5/Ku80. Interacts with RBBP8/CtIP. In terms of processing, auto-ubiquitinated.

The protein resides in the chromosome. It catalyses the reaction S-ubiquitinyl-[E2 ubiquitin-conjugating enzyme]-L-cysteine + [acceptor protein]-L-lysine = [E2 ubiquitin-conjugating enzyme]-L-cysteine + N(6)-ubiquitinyl-[acceptor protein]-L-lysine.. Its pathway is protein modification; protein ubiquitination. E3 ubiquitin-protein ligase involved in DNA damage response by promoting DNA resection and homologous recombination. Recruited to sites of double-strand breaks following DNA damage and specifically promotes double-strand break repair via homologous recombination. Two different, non-exclusive, mechanisms have been proposed. According to a report, regulates the choice of double-strand break repair by favoring homologous recombination over non-homologous end joining (NHEJ): acts by mediating ubiquitination of XRCC5/Ku80, leading to remove the Ku complex from DNA breaks, thereby promoting homologous recombination. According to another report, cooperates with UBE2Ds E2 ubiquitin ligases (UBE2D1, UBE2D2, UBE2D3 or UBE2D4) to promote homologous recombination by mediating ubiquitination of RBBP8/CtIP. Together with NLK, involved in the ubiquitination and degradation of TCF/LEF. Also exhibits auto-ubiquitination activity in combination with UBE2K. May act as a negative regulator in the Wnt/beta-catenin-mediated signaling pathway. The protein is E3 ubiquitin-protein ligase RNF138 of Mus musculus (Mouse).